A 206-amino-acid polypeptide reads, in one-letter code: Probable glutathione peroxidase 3, mitochondrial (206 aa).

The N-terminal 12 residues, 1–12, are a transit peptide targeting the mitochondrion; sequence MPRSSRWVNQRA. Cys-80 is an active-site residue.

It belongs to the glutathione peroxidase family. Interacts with ABI1 and ABI2. Ubiquitous.

It localises to the mitochondrion. The enzyme catalyses 2 glutathione + H2O2 = glutathione disulfide + 2 H2O. With respect to regulation, the redox states are modulated by H(2)O(2). May constitute a glutathione peroxidase-like protective system against oxidative stresses. Involved positively in abscisic acid (ABA) signaling pathway that regulates numerous ABA responses, such as stomatal closure, seed germination and inhibition of vegetative growth. Oxidizes and represses target proteins (e.g. the phosphatase activity of ABI1 and ABI2) when oxidized by H(2)O(2), probably after ABA signaling. Modulates the calcium channel activity in guard cells in response to ABA or H(2)O(2). Confers tolerance to drought stress, by enhancing the ABA-dependent stomatal closure. The sequence is that of Probable glutathione peroxidase 3, mitochondrial (GPX3) from Arabidopsis thaliana (Mouse-ear cress).